The primary structure comprises 590 residues: Guanylate-binding protein 1 (590 aa).

A GTPase domain (Globular) region spans residues M1–C309. The GB1/RHD3-type G domain occupies T35–K276. Residues G45–S52, L67–S69, and D97–L101 contribute to the GTP site. Phosphoserine is present on S156. Residue C587 is modified to Cysteine methyl ester. A lipid anchor (S-farnesyl cysteine) is attached at C587. At T588 the chain carries Phosphothreonine. A propeptide spans T588–S590 (removed in mature form).

It belongs to the TRAFAC class dynamin-like GTPase superfamily. GB1/RHD3 GTPase family. GB1 subfamily. As to quaternary structure, homodimer; homodimerization occurs upon GTP-binding and is required for the second hydrolysis step from GDP to GMP. Undergoes conformational changes and oligomerization upon GTP-binding and hydrolysis. Heterodimer with other family members, including GBP2, GBP3, GBP4 and GBP5. Dimerization regulates subcellular location to membranous structures. Interacts with SQSTM1. Interacts (when phosphorylated) with 14-3-3 protein sigma (SFN); leading to GBP1 retention in the cytosol and inactivation. In terms of processing, isoprenylation is required for proper subcellular location. Post-translationally, phosphorylated at Ser-156 by PIM1 in absence of infection, inhibits GBP1: phosphorylation promotes interaction with 14-3-3 protein sigma (SFN), leading to GBP1 retention in the cytosol. Dephosphorylated in response to infection, liberating GBP1.

It localises to the cytoplasmic vesicle membrane. It is found in the golgi apparatus membrane. The protein resides in the cell membrane. The protein localises to the cytoplasm. Its subcellular location is the cytosol. It localises to the secreted. It catalyses the reaction GTP + H2O = GDP + phosphate + H(+). The enzyme catalyses GDP + H2O = GMP + phosphate + H(+). Interferon (IFN)-inducible GTPase that plays important roles in innate immunity against a diverse range of bacterial, viral and protozoan pathogens. Hydrolyzes GTP to GMP in two consecutive cleavage reactions: GTP is first hydrolyzed to GDP and then to GMP in a processive manner. Following infection, recruited to the pathogen-containing vacuoles or vacuole-escaped bacteria and promotes both inflammasome assembly and autophagy. Acts as a positive regulator of inflammasome assembly by facilitating the detection of inflammasome ligands from pathogens. Involved in the lysis of pathogen-containing vacuoles, releasing pathogens into the cytosol. Following pathogen release in the cytosol, forms a protein coat in a GTPase-dependent manner that encapsulates pathogens and promotes the detection of ligands by pattern recognition receptors. Plays a key role in inflammasome assembly in response to infection by Gram-negative bacteria: following pathogen release in the cytosol, forms a protein coat that encapsulates Gram-negative bacteria and directly binds to lipopolysaccharide (LPS), disrupting the O-antigen barrier and unmasking lipid A that is that detected by the non-canonical inflammasome effector CASP4/CASP11. Also promotes recruitment of proteins that mediate bacterial cytolysis, leading to release double-stranded DNA (dsDNA) that activates the AIM2 inflammasome. Involved in autophagy by regulating bacteriolytic peptide generation via its interaction with ubiquitin-binding protein SQSTM1, which delivers monoubiquitinated proteins to autolysosomes for the generation of bacteriolytic peptides. Confers protection to several pathogens, including the bacterial pathogens L.monocytogenes and M.bovis BCG as well as the protozoan pathogen T.gondii. Exhibits antiviral activity against influenza virus. The sequence is that of Guanylate-binding protein 1 (GBP1) from Chlorocebus aethiops (Green monkey).